Reading from the N-terminus, the 669-residue chain is UvrABC system protein C (669 aa).

The 80-residue stretch at 16–95 (TNPGVYRFRD…IKEFKPRFNV (80 aa)) folds into the GIY-YIG domain. A UVR domain is found at 207-242 (KRFIGRLEKDMAAAVAELDYERAARVRDDIIALRKV).

This sequence belongs to the UvrC family. As to quaternary structure, interacts with UvrB in an incision complex.

Its subcellular location is the cytoplasm. In terms of biological role, the UvrABC repair system catalyzes the recognition and processing of DNA lesions. UvrC both incises the 5' and 3' sides of the lesion. The N-terminal half is responsible for the 3' incision and the C-terminal half is responsible for the 5' incision. This is UvrABC system protein C from Arthrobacter sp. (strain FB24).